The chain runs to 126 residues: Glycerol dehydrogenase small subunit (126 aa).

The next 4 membrane-spanning stretches (helical) occupy residues 13 to 33 (WLTLVLGVVIILVGLFFVIAG), 41 to 61 (GSVYYVICGIPLVAGGVFMLM), 67 to 87 (AFLYLGALAYTWVWSLWEVGF), and 92 to 112 (LLPRDFGPTLLGILVALTIPV).

The protein resides in the cell membrane. It carries out the reaction glycerol + A = dihydroxyacetone + AH2. Its function is as follows. Catalyzes the oxidation of glycerol to glycerone. Also acts, more slowly, on a number of other polyols including D-sorbitol, D-arabinitol, D-mannitol, meso-erythritol, adonitol and propylene glycol. The protein is Glycerol dehydrogenase small subunit (sldB) of Gluconobacter oxydans (strain 621H) (Gluconobacter suboxydans).